The chain runs to 172 residues: Protein sym-1 (172 aa).

5 consecutive transmembrane segments (helical) span residues 13–33, 52–72, 94–114, 128–148, and 152–172; these read PLLT…VAAQ, MVLY…RFLQ, GLFA…LEGT, LSTN…VVPL, and VLFV…LNGQ.

The protein belongs to the peroxisomal membrane protein PXMP2/4 family.

It localises to the mitochondrion inner membrane. In terms of biological role, may be involved in cellular response to stress. Required to maintain mitochondrial DNA (mtDNA) integrity and stability. The chain is Protein sym-1 (sym-1) from Neurospora crassa (strain ATCC 24698 / 74-OR23-1A / CBS 708.71 / DSM 1257 / FGSC 987).